The primary structure comprises 216 residues: Ras-related protein Rab-2B (216 aa).

GDP contacts are provided by Gly-16, Val-17, Gly-18, Lys-19, Ser-20, and Cys-21. GTP contacts are provided by Gly-16, Val-17, Gly-18, Lys-19, Ser-20, Cys-21, and Thr-38. Residue Ser-20 coordinates Mg(2+). The short motif at 37–42 is the Switch 1 element; that stretch reads LTIGVE. Mg(2+) contacts are provided by Thr-38 and Asp-61. A Switch 2 motif is present at residues 63–72; it reads AGQESFRSIT. 6 residues coordinate GTP: Gly-64, Asn-119, Lys-120, Asp-122, Ala-150, and Lys-151. Asn-119 is a GDP binding site. Asp-122, Ala-150, and Lys-151 together coordinate GDP. Residues 189–216 form a disordered region; the sequence is PQQSISTSVGPSASQRNSRDIGSNSGCC. At Ser-202 the chain carries Phosphoserine. 2 S-geranylgeranyl cysteine lipidation sites follow: Cys-215 and Cys-216.

This sequence belongs to the small GTPase superfamily. Rab family. In terms of assembly, interacts (in GTP-bound form) with GARIN4 (via N-terminus). Interacts (in GTP-bound form) with GARIN5A. Interacts (in GTP-bound form) with GARIN1B. Interacts with VPS39 and VPS41. Mg(2+) is required as a cofactor. Expressed in kidney, prostate, lung, liver, thymus, colon, pancreas, and skeletal muscle, and low levels in placenta. Not detected in heart, brain, spleen, testis, ovary, small intestine and leukocyte.

Its subcellular location is the cell membrane. The protein localises to the endoplasmic reticulum membrane. It is found in the golgi apparatus membrane. It localises to the cytoplasmic vesicle. The protein resides in the secretory vesicle. Its subcellular location is the acrosome. The protein localises to the autophagosome membrane. The catalysed reaction is GTP + H2O = GDP + phosphate + H(+). Its activity is regulated as follows. Regulated by guanine nucleotide exchange factors (GEFs) which promote the exchange of bound GDP for free GTP, GTPase activating proteins (GAPs) which increase the GTP hydrolysis activity, and GDP dissociation inhibitors (GDIs) which inhibit the dissociation of the nucleotide from the GTPase. Functionally, the small GTPases Rab are key regulators of intracellular membrane trafficking, from the formation of transport vesicles to their fusion with membranes. Rabs cycle between active GTP-bound and inactive GDP-bound states. In their active state, drive transport of vesicular carriers from donor organelles to acceptor organelles to regulate the membrane traffic that maintains organelle identity and morphology. Regulates the compacted morphology of the Golgi. Promotes cytosolic DNA-induced innate immune responses. Regulates IFN responses against DNA viruses by regulating the CGAS-STING signaling axis. Together with RAB2A redundantly required for efficient autophagic flux. The chain is Ras-related protein Rab-2B from Homo sapiens (Human).